We begin with the raw amino-acid sequence, 409 residues long: uncharacterized protein (409 aa).

The next 10 membrane-spanning stretches (helical) occupy residues 62-82 (FSLG…WVWI), 100-120 (LLLF…PEAF), 123-143 (MGLL…LFAL), 152-172 (ASFM…TFWI), 183-203 (VVLW…RYWV), 252-272 (GTPW…WIYF), 293-313 (AQYL…FTAV), 328-348 (YNFA…TMWM), 355-375 (VLPY…TLVP), and 376-396 (FVAN…VAVW).

The protein localises to the cell membrane. This is an uncharacterized protein from Rhizobium meliloti (strain 1021) (Ensifer meliloti).